The chain runs to 126 residues: Glycine cleavage system H protein (126 aa).

Residues 22-104 (VVFIGITDYA…YGAGWIIKVK (83 aa)) enclose the Lipoyl-binding domain. Position 63 is an N6-lipoyllysine (lysine 63).

Belongs to the GcvH family. As to quaternary structure, the glycine cleavage system is composed of four proteins: P, T, L and H. The cofactor is (R)-lipoate.

The glycine cleavage system catalyzes the degradation of glycine. The H protein shuttles the methylamine group of glycine from the P protein to the T protein. In Porphyromonas gingivalis (strain ATCC 33277 / DSM 20709 / CIP 103683 / JCM 12257 / NCTC 11834 / 2561), this protein is Glycine cleavage system H protein.